Consider the following 251-residue polypeptide: 2,3-bisphosphoglycerate-dependent phosphoglycerate mutase (251 aa).

Substrate is bound by residues 8–15 (RHGESLWN), 21–22 (TG), Arg-60, 87–90 (ERHY), Lys-98, 114–115 (RR), and 183–184 (GN). The Tele-phosphohistidine intermediate role is filled by His-9. Glu-87 acts as the Proton donor/acceptor in catalysis.

It belongs to the phosphoglycerate mutase family. BPG-dependent PGAM subfamily.

It carries out the reaction (2R)-2-phosphoglycerate = (2R)-3-phosphoglycerate. The protein operates within carbohydrate degradation; glycolysis; pyruvate from D-glyceraldehyde 3-phosphate: step 3/5. Catalyzes the interconversion of 2-phosphoglycerate and 3-phosphoglycerate. The sequence is that of 2,3-bisphosphoglycerate-dependent phosphoglycerate mutase from Thermoanaerobacter pseudethanolicus (strain ATCC 33223 / 39E) (Clostridium thermohydrosulfuricum).